A 396-amino-acid chain; its full sequence is Phosphoglycerate kinase (396 aa).

Substrate is bound by residues Asp19 to Asn21, Arg35, His58 to Arg61, Arg117, and Arg150. ATP-binding positions include Lys201, Glu323, and Gly349 to Thr352.

This sequence belongs to the phosphoglycerate kinase family. In terms of assembly, monomer.

Its subcellular location is the cytoplasm. It carries out the reaction (2R)-3-phosphoglycerate + ATP = (2R)-3-phospho-glyceroyl phosphate + ADP. It functions in the pathway carbohydrate degradation; glycolysis; pyruvate from D-glyceraldehyde 3-phosphate: step 2/5. The protein is Phosphoglycerate kinase of Desulfosudis oleivorans (strain DSM 6200 / JCM 39069 / Hxd3) (Desulfococcus oleovorans).